Consider the following 444-residue polypeptide: Tubulin beta-2 chain (444 aa).

Residues glutamine 11, glutamate 69, serine 138, glycine 142, threonine 143, glycine 144, asparagine 204, and asparagine 226 each contribute to the GTP site. Glutamate 69 serves as a coordination point for Mg(2+).

It belongs to the tubulin family. As to quaternary structure, dimer of alpha and beta chains. A typical microtubule is a hollow water-filled tube with an outer diameter of 25 nm and an inner diameter of 15 nM. Alpha-beta heterodimers associate head-to-tail to form protofilaments running lengthwise along the microtubule wall with the beta-tubulin subunit facing the microtubule plus end conferring a structural polarity. Microtubules usually have 13 protofilaments but different protofilament numbers can be found in some organisms and specialized cells. It depends on Mg(2+) as a cofactor.

The protein resides in the cytoplasm. It is found in the cytoskeleton. Functionally, tubulin is the major constituent of microtubules, a cylinder consisting of laterally associated linear protofilaments composed of alpha- and beta-tubulin heterodimers. Microtubules grow by the addition of GTP-tubulin dimers to the microtubule end, where a stabilizing cap forms. Below the cap, tubulin dimers are in GDP-bound state, owing to GTPase activity of alpha-tubulin. This chain is Tubulin beta-2 chain (TUBB2), found in Zea mays (Maize).